Here is a 339-residue protein sequence, read N- to C-terminus: Dihydroorotate dehydrogenase (quinone) (339 aa).

Residues 62–66 (AGMDK) and Thr86 each bind FMN. Lys66 contacts substrate. 111–115 (NRMGF) contacts substrate. Positions 139 and 172 each coordinate FMN. Position 172 (Asn172) interacts with substrate. Ser175 functions as the Nucleophile in the catalytic mechanism. Asn177 lines the substrate pocket. Lys217 and Thr245 together coordinate FMN. 246–247 (NT) provides a ligand contact to substrate. Residues Gly268, Gly297, and 318–319 (YS) each bind FMN.

Belongs to the dihydroorotate dehydrogenase family. Type 2 subfamily. In terms of assembly, monomer. The cofactor is FMN.

The protein localises to the cell membrane. The catalysed reaction is (S)-dihydroorotate + a quinone = orotate + a quinol. The protein operates within pyrimidine metabolism; UMP biosynthesis via de novo pathway; orotate from (S)-dihydroorotate (quinone route): step 1/1. Functionally, catalyzes the conversion of dihydroorotate to orotate with quinone as electron acceptor. This Shewanella baltica (strain OS223) protein is Dihydroorotate dehydrogenase (quinone).